A 643-amino-acid polypeptide reads, in one-letter code: MPIITLPDGSQRQFDNPVSVLEVAQDIGAGLAKATIAGRVNGERHDACDIIEQDATLEIITAKDEDGLEIIRHSCAHLLGHAIKQLFPDVKMAIGPTIENGFYYDVDLDRSLTQEDIDAIEKRMLELAKTNYDVVKKRVTWQEARDTFEKRGEPYKMAILDENIERTAMPALYHHLEYIDMCRGPHVPNMRFCQHFKLQKVAGAYWRGDSKNKMLQRIYGTAWADKKQLAEYLTRLEEAAKRDHRKIGKALDLYHMQEEAPGMVFWHNDGWTIFRELETFVRTKLKQYDYQEVKGPFMMDRVLWEKTGHWQNYADLMFTTQSENREYAIKPMNCPGHVQIFNQGLKSYRDLPIRMAEFGSCHRNEPSGSLHGLMRVRGFTQDDAHIFCTEDQIESEVTSCIKMVYDIYSTFGFTNIAVKLSTRPENRIGSDEMWDRAEAGLAAALAHNGLEYEIQEGEGAFYGPKIEFALRDCLGREWQCGTVQLDFALPGRLDATYVAEDNSRKTPVMIHRAILGSIERFIGIITEEYAGFFPAWLAPTQAVVMNITDSQADYVQKVAKQLSDVGLRVKTDLRNEKVGFKIREHTLRRVPYMLVCGDKEIAEGKVAVRTRKGADLGTFTVEEFAEILKNQVRSRELKLLNEE.

In terms of domain architecture, TGS spans 1–61 (MPIITLPDGS…EQDATLEIIT (61 aa)). Residues 243-534 (DHRKIGKALD…ITEEYAGFFP (292 aa)) are catalytic. Cys-334, His-385, and His-511 together coordinate Zn(2+).

Belongs to the class-II aminoacyl-tRNA synthetase family. As to quaternary structure, homodimer. Requires Zn(2+) as cofactor.

The protein resides in the cytoplasm. It catalyses the reaction tRNA(Thr) + L-threonine + ATP = L-threonyl-tRNA(Thr) + AMP + diphosphate + H(+). In terms of biological role, catalyzes the attachment of threonine to tRNA(Thr) in a two-step reaction: L-threonine is first activated by ATP to form Thr-AMP and then transferred to the acceptor end of tRNA(Thr). Also edits incorrectly charged L-seryl-tRNA(Thr). The polypeptide is Threonine--tRNA ligase (Haemophilus influenzae (strain PittGG)).